A 401-amino-acid polypeptide reads, in one-letter code: Acetate kinase (401 aa).

Asn9 provides a ligand contact to Mg(2+). Lys16 is a binding site for ATP. Arg88 contacts substrate. Asp147 acts as the Proton donor/acceptor in catalysis. Residues 207–211 (HLGNG), 282–284 (DCR), and 333–337 (GIGEN) contribute to the ATP site. Residue Glu388 coordinates Mg(2+).

It belongs to the acetokinase family. Homodimer. Mg(2+) serves as cofactor. Requires Mn(2+) as cofactor.

The protein localises to the cytoplasm. The catalysed reaction is acetate + ATP = acetyl phosphate + ADP. It participates in metabolic intermediate biosynthesis; acetyl-CoA biosynthesis; acetyl-CoA from acetate: step 1/2. Functionally, catalyzes the formation of acetyl phosphate from acetate and ATP. Can also catalyze the reverse reaction. The chain is Acetate kinase from Haemophilus influenzae (strain 86-028NP).